We begin with the raw amino-acid sequence, 921 residues long: Isoleucine--tRNA ligase 1 (921 aa).

A 'HIGH' region motif is present at residues 57 to 67 (PYANGDIHMGH). Residue glutamate 552 coordinates L-isoleucyl-5'-AMP. Residues 593–597 (KMSKS) carry the 'KMSKS' region motif. Lysine 596 is a binding site for ATP. Positions 888, 891, 908, and 911 each coordinate Zn(2+).

The protein belongs to the class-I aminoacyl-tRNA synthetase family. IleS type 1 subfamily. In terms of assembly, monomer. Zn(2+) serves as cofactor.

The protein localises to the cytoplasm. The catalysed reaction is tRNA(Ile) + L-isoleucine + ATP = L-isoleucyl-tRNA(Ile) + AMP + diphosphate. In terms of biological role, catalyzes the attachment of isoleucine to tRNA(Ile). As IleRS can inadvertently accommodate and process structurally similar amino acids such as valine, to avoid such errors it has two additional distinct tRNA(Ile)-dependent editing activities. One activity is designated as 'pretransfer' editing and involves the hydrolysis of activated Val-AMP. The other activity is designated 'posttransfer' editing and involves deacylation of mischarged Val-tRNA(Ile). In Bacillus thuringiensis subsp. konkukian (strain 97-27), this protein is Isoleucine--tRNA ligase 1.